The sequence spans 232 residues: Glycerol-3-phosphate acyltransferase 4 (232 aa).

The next 6 helical transmembrane spans lie at 4-24, 54-76, 80-99, 107-127, 143-163, and 168-188; these read VFLIMIPAGYLVGAIPMAYLL, LGLAVFVFDVSKGAIIILLAGWL, LWQQIVVGLLTIAGHNWPVF, GIATSLGVALVMAPVPALIAL, VFLGVGALPVMSGYFHGFFGV, and TVTWGFAGLFLIMIVRRLMAP.

The protein belongs to the PlsY family. In terms of assembly, probably interacts with PlsX.

The protein localises to the cell membrane. The catalysed reaction is an acyl phosphate + sn-glycerol 3-phosphate = a 1-acyl-sn-glycero-3-phosphate + phosphate. Its pathway is lipid metabolism; phospholipid metabolism. In terms of biological role, catalyzes the transfer of an acyl group from acyl-phosphate (acyl-PO(4)) to glycerol-3-phosphate (G3P) to form lysophosphatidic acid (LPA). This enzyme utilizes acyl-phosphate as fatty acyl donor, but not acyl-CoA or acyl-ACP. This Dehalococcoides mccartyi (strain CBDB1) protein is Glycerol-3-phosphate acyltransferase 4.